The sequence spans 240 residues: LOB domain-containing protein 39 (240 aa).

Residues 1–107 (MSCNGCRVLR…VETVLRGGTL (107 aa)) form the LOB domain. The segment at 200 to 233 (GDRPGSPSEESVTTSCWENGMRGDNKQKRNKGEK) is disordered. The span at 207 to 216 (SEESVTTSCW) shows a compositional bias: polar residues.

Belongs to the LOB domain-containing protein family. In terms of tissue distribution, expressed in young shoots, roots, stems, leaves and flowers.

The protein is LOB domain-containing protein 39 (LBD39) of Arabidopsis thaliana (Mouse-ear cress).